We begin with the raw amino-acid sequence, 349 residues long: Heat-inducible transcription repressor HrcA (349 aa).

This sequence belongs to the HrcA family.

Functionally, negative regulator of class I heat shock genes (grpE-dnaK-dnaJ and groELS operons). Prevents heat-shock induction of these operons. This chain is Heat-inducible transcription repressor HrcA, found in Xylella fastidiosa (strain 9a5c).